Here is a 207-residue protein sequence, read N- to C-terminus: ATP-dependent Clp protease proteolytic subunit (207 aa).

The Nucleophile role is filled by Ser112. His137 is an active-site residue.

Belongs to the peptidase S14 family. In terms of assembly, fourteen ClpP subunits assemble into 2 heptameric rings which stack back to back to give a disk-like structure with a central cavity, resembling the structure of eukaryotic proteasomes.

The protein localises to the cytoplasm. The catalysed reaction is Hydrolysis of proteins to small peptides in the presence of ATP and magnesium. alpha-casein is the usual test substrate. In the absence of ATP, only oligopeptides shorter than five residues are hydrolyzed (such as succinyl-Leu-Tyr-|-NHMec, and Leu-Tyr-Leu-|-Tyr-Trp, in which cleavage of the -Tyr-|-Leu- and -Tyr-|-Trp bonds also occurs).. Its function is as follows. Cleaves peptides in various proteins in a process that requires ATP hydrolysis. Has a chymotrypsin-like activity. Plays a major role in the degradation of misfolded proteins. The chain is ATP-dependent Clp protease proteolytic subunit from Bacteroides fragilis (strain ATCC 25285 / DSM 2151 / CCUG 4856 / JCM 11019 / LMG 10263 / NCTC 9343 / Onslow / VPI 2553 / EN-2).